The primary structure comprises 141 residues: MQLTNFTDYGLRALIYMASLPEGRMTSISEVTDVYGVSRNHMVKIINQLSRAGYVTAVRGKNGGIRLGKPASAIRIGDVVRELEPLSLVNCSSEFCHITPACRLKQALSKAVQSFLTELDNYTLADLVEENQPLYKLLLVE.

The 128-residue stretch at 2 to 129 folds into the HTH rrf2-type domain; sequence QLTNFTDYGL…DNYTLADLVE (128 aa). Positions 28–51 form a DNA-binding region, H-T-H motif; that stretch reads ISEVTDVYGVSRNHMVKIINQLSR. Residues cysteine 91, cysteine 96, and cysteine 102 each contribute to the [2Fe-2S] cluster site.

Requires [2Fe-2S] cluster as cofactor.

Its function is as follows. Nitric oxide-sensitive repressor of genes involved in protecting the cell against nitrosative stress. May require iron for activity. The polypeptide is HTH-type transcriptional repressor NsrR (Shigella boydii serotype 18 (strain CDC 3083-94 / BS512)).